The primary structure comprises 126 residues: Protein ApaG (126 aa).

The region spanning 2 to 126 (SDPRYQIDVS…FRLAVPGALH (125 aa)) is the ApaG domain.

In Azotobacter vinelandii (strain DJ / ATCC BAA-1303), this protein is Protein ApaG.